Consider the following 511-residue polypeptide: 2,3-bisphosphoglycerate-independent phosphoglycerate mutase (511 aa).

Asp12 provides a ligand contact to Mn(2+). The residue at position 36 (Tyr36) is a Phosphotyrosine. Position 62 (Ser62) interacts with Mn(2+). The active-site Phosphoserine intermediate is the Ser62. Substrate contacts are provided by residues His123, 153–154 (RD), Arg185, Arg191, 261–264 (RPDR), and Lys336. Residues Asp403, His407, Asp444, His445, and His462 each coordinate Mn(2+).

The protein belongs to the BPG-independent phosphoglycerate mutase family. In terms of assembly, monomer. Mn(2+) serves as cofactor.

It catalyses the reaction (2R)-2-phosphoglycerate = (2R)-3-phosphoglycerate. Its pathway is carbohydrate degradation; glycolysis; pyruvate from D-glyceraldehyde 3-phosphate: step 3/5. In terms of biological role, essential for rapid growth and for sporulation. Catalyzes the interconversion of 2-phosphoglycerate and 3-phosphoglycerate. The sequence is that of 2,3-bisphosphoglycerate-independent phosphoglycerate mutase from Bacillus licheniformis (strain ATCC 14580 / DSM 13 / JCM 2505 / CCUG 7422 / NBRC 12200 / NCIMB 9375 / NCTC 10341 / NRRL NRS-1264 / Gibson 46).